Consider the following 438-residue polypeptide: Prenyltransferase malE (438 aa).

Glutamate 92 lines the substrate pocket. Positions 106, 192, 194, 259, 261, 346, and 411 each coordinate dimethylallyl diphosphate.

The protein belongs to the tryptophan dimethylallyltransferase family.

It carries out the reaction (S)-3-(indol-3-ylmethyl)-6,7,8,8a-tetrahydropyrrolo[1,2-a]pyrazin-1-one + dimethylallyl diphosphate = (S)-3-{[2-(1,1-dimethylallyl)-indol-3-yl]methyl}-6,7,8,8a-tetrahydropyrrolo[1,2-a]pyrazin-1-one + diphosphate. The enzyme catalyses 1-hydroxy-3-(indol-3-ylmethyl)-6H,7H,8H-5lambda(5)-pyrrolo[1,2-a]pyrazine + dimethylallyl diphosphate = 1-hydroxy-3-{[2-(1,1-dimethylallyl)-indol-3-yl]methyl}-6H,7H,8H-5lambda(5)-pyrrolo[1,2-a]pyrazine + diphosphate. The protein operates within alkaloid biosynthesis. Prenyltransferase; part of the gene cluster that mediates the biosynthesis of malbrancheamide, a dichlorinated fungal indole alkaloid that belongs to a family of natural products containing a characteristic bicyclo[2.2.2]diazaoctane core. The first step of malbrancheamide biosynthesis involves coupling of L-proline and L-tryptophan by malG, a bimodular NRPS, to produce L-Pro-L-Trp aldehyde through reductive offloading. This compound undergoes spontaneous cyclization and dehydration to give a dienamine which is reverse prenylated at C-2 by malE. The other prenyltransferase present in the cluster, malB, displays modest activity, suggesting that may be a redundant gene in the pathway. Subsequently, a [4+2] Diels-Alder cyclo-addition catalyzed by the bifunctional enzyme malC forms the characteristic bicyclo[2.2.2]diazaoctane ring of premalbrancheamid. Finally, the flavin-dependent halogenase malA catalyzes the iterative dichlorination of the indole ring of premalbrancheamide to yield C-9 monochlorinated malbrancheamide B, C-8 monochlorinated isomalbrancheamide B, and dichlorinated malbrancheamide. MalA is also able to brominate premalbrancheamide at C-9 to yield malbrancheamide C, and, to a lesser extend, at C-8 to yield isomalbrancheamide C. Finally, malA can brominate C-9 monochlorinated malbrancheamide B at C-8 to yield malbrancheamide D, or C-8 monochlorinated isomalbrancheamide B at C-9 to produce isomalbrancheamide D. The chain is Prenyltransferase malE from Malbranchea aurantiaca.